The primary structure comprises 776 residues: Mitochondrial intermediate peptidase (776 aa).

A mitochondrion-targeting transit peptide spans 1 to 38; sequence MLNSARTVLARHSARQLYRFRGCLVHQQRHRHQVQRTL. His-560 is a Zn(2+) binding site. The active site involves Glu-561. His-564 and His-567 together coordinate Zn(2+).

This sequence belongs to the peptidase M3 family. Zn(2+) serves as cofactor.

The protein resides in the mitochondrion matrix. The enzyme catalyses Release of an N-terminal octapeptide as second stage of processing of some proteins imported into the mitochondrion.. Its function is as follows. Cleaves proteins, imported into the mitochondrion, to their mature size. While most mitochondrial precursor proteins are processed to the mature form in one step by mitochondrial processing peptidase (MPP), the sequential cleavage by MIP of an octapeptide after initial processing by MPP is a required step for a subgroup of nuclear-encoded precursor proteins destined for the matrix or the inner membrane. The protein is Mitochondrial intermediate peptidase (OCT1) of Coprinopsis cinerea (strain Okayama-7 / 130 / ATCC MYA-4618 / FGSC 9003) (Inky cap fungus).